A 77-amino-acid chain; its full sequence is Large ribosomal subunit protein bL28 (77 aa).

The protein belongs to the bacterial ribosomal protein bL28 family.

The chain is Large ribosomal subunit protein bL28 from Cupriavidus necator (strain ATCC 17699 / DSM 428 / KCTC 22496 / NCIMB 10442 / H16 / Stanier 337) (Ralstonia eutropha).